Here is a 248-residue protein sequence, read N- to C-terminus: PACRG-like protein (248 aa).

Met1 is modified (N-acetylmethionine). A disordered region spans residues 1–72 (MQRSECSGGV…NPKTINPFGE (72 aa)). 2 stretches are compositionally biased toward polar residues: residues 14-29 (NRAT…SSTQ) and 36-45 (VQRSKSSSLT). A Phosphoserine modification is found at Ser47.

This Mus musculus (Mouse) protein is PACRG-like protein (Pacrgl).